A 677-amino-acid chain; its full sequence is DNA ligase (677 aa).

Residues aspartate 32–aspartate 36, serine 81–leucine 82, and glutamate 112 contribute to the NAD(+) site. Lysine 114 serves as the catalytic N6-AMP-lysine intermediate. NAD(+) is bound by residues arginine 135, glutamate 171, lysine 288, and lysine 312. Zn(2+)-binding residues include cysteine 416, cysteine 419, cysteine 434, and cysteine 439. The region spanning asparagine 598–serine 677 is the BRCT domain.

Belongs to the NAD-dependent DNA ligase family. LigA subfamily. It depends on Mg(2+) as a cofactor. Mn(2+) serves as cofactor.

It carries out the reaction NAD(+) + (deoxyribonucleotide)n-3'-hydroxyl + 5'-phospho-(deoxyribonucleotide)m = (deoxyribonucleotide)n+m + AMP + beta-nicotinamide D-nucleotide.. In terms of biological role, DNA ligase that catalyzes the formation of phosphodiester linkages between 5'-phosphoryl and 3'-hydroxyl groups in double-stranded DNA using NAD as a coenzyme and as the energy source for the reaction. It is essential for DNA replication and repair of damaged DNA. The protein is DNA ligase of Dehalococcoides mccartyi (strain CBDB1).